The chain runs to 526 residues: Peptide chain release factor 3 (526 aa).

Residues 9 to 277 (DLRRTFAIIS…GLTKWAPKPL (269 aa)) form the tr-type G domain. Residues 18-25 (SHPDAGKT), 86-90 (DTPGH), and 140-143 (NKMD) contribute to the GTP site.

Belongs to the TRAFAC class translation factor GTPase superfamily. Classic translation factor GTPase family. PrfC subfamily.

Its subcellular location is the cytoplasm. In terms of biological role, increases the formation of ribosomal termination complexes and stimulates activities of RF-1 and RF-2. It binds guanine nucleotides and has strong preference for UGA stop codons. It may interact directly with the ribosome. The stimulation of RF-1 and RF-2 is significantly reduced by GTP and GDP, but not by GMP. This chain is Peptide chain release factor 3, found in Colwellia psychrerythraea (strain 34H / ATCC BAA-681) (Vibrio psychroerythus).